The primary structure comprises 302 residues: MALVVICGQPCSGKSIAAVTLAETLKESETKQSVRIIDEASFHLDRNQNYANMPAEKNLRGKLRSDVDRSVSTGEIVIVDSLNSIKGYRYELWCIARAAGIRYCVVYCDVDEAHCRQWNKERSDRGEDGYDDGIFEDLVRRFEKPERRNRWDSPLFELYPSREVIDKSSPVILEAVTYLTKTVDSKTQDVRILQPSIATQAARFSEANSLYELDRATQEIINAIVEQQSLGAAISRVTLGNELPPIEICRPIGLPELRRLRRTFVKLMGQSSLSGPPLPTDADSAKRRFVDYLNREFGGNNA.

8–15 (GQPCSGKS) provides a ligand contact to ATP. Residues 260–273 (LRRTFVKLMGQSSL) form a calmodulin-binding region.

It belongs to the KTI12 family. Interacts with the elongator complex. Binds to calmodulin in a calcium-dependent manner. As to expression, expressed in roots, hypocotyls, cotyledons, shoot apices, stems, inflorescence apices, leaves and flowers.

The protein resides in the cytoplasm. The protein localises to the nucleus. In terms of biological role, elongator complex-associated factor that is not a structural subunit but rather transiently contacts the complex. Regulates both meristem activity and organ growth; acts as a positive regulator of adaxial leaf patterning by modulating both cell division and differentiation. Required for an early step in synthesis of 5-carbamoylmethyl (ncm5) groups present on uridines (ncm5U) at the wobble position in tRNA. The chain is Protein KTI12 homolog from Arabidopsis thaliana (Mouse-ear cress).